Reading from the N-terminus, the 136-residue chain is Secreted RxLR effector protein 10 (136 aa).

Positions 1–22 are cleaved as a signal peptide; it reads MRVLNFVLTTTVVLLTSSEGIA. The RxLR-dEER signature appears at 42–56; that stretch reads RSLRATENPGSDESR. The tract at residues 42–78 is disordered; that stretch reads RSLRATENPGSDESRLNEKDTGFDPDGSSSKEDEDIG. Residues 53–63 show a composition bias toward basic and acidic residues; the sequence is DESRLNEKDTG.

The protein belongs to the RxLR effector family.

It localises to the secreted. The protein localises to the host cytoplasm. Its subcellular location is the host nucleus. Functionally, effector that acts as a broad suppressor of cell death to interrupt plant immunity. Inhibits cell death induced by cell death-inducing proteins, including the PAMP elicitor INF1 from P.infestans. The protein is Secreted RxLR effector protein 10 of Plasmopara viticola (Downy mildew of grapevine).